A 214-amino-acid chain; its full sequence is Predicted GPI-anchored protein 57 (214 aa).

Residues 1–18 (MLFTQLIILFTFISQIIC) form the signal peptide. The disordered stretch occupies residues 36–101 (RGSSGHSSGG…SSGSSSGSRN (66 aa)). The segment covering 42-60 (SSGGGHSSSGSHSSGGGHS) has biased composition (gly residues). Residues 76–85 (SGSSSGSSSG) are compositionally biased toward low complexity. Asn-182 carries N-linked (GlcNAc...) asparagine glycosylation. A lipid anchor (GPI-anchor amidated glycine) is attached at Gly-191. The propeptide at 192-214 (VSLNIPSTHFYVIGLAAAYSIVL) is removed in mature form.

Belongs to the PGA37 family.

It localises to the secreted. Its subcellular location is the cell membrane. In terms of biological role, predicted GPI-anchored protein which may have a role during host infection. The sequence is that of Predicted GPI-anchored protein 57 (PGA57) from Candida albicans (strain SC5314 / ATCC MYA-2876) (Yeast).